Consider the following 139-residue polypeptide: Small ribosomal subunit protein uS12m (139 aa).

Residues 1–29 (MSWSGLLRGLSMSLNYGLALAPRPWGTRP) constitute a mitochondrion transit peptide. The disordered stretch occupies residues 37–57 (HRRGPPKFPPSKPGPTEGRPQ).

Belongs to the universal ribosomal protein uS12 family. Component of the mitochondrial ribosome small subunit (28S) which comprises a 12S rRNA and about 30 distinct proteins.

It localises to the mitochondrion. The chain is Small ribosomal subunit protein uS12m (MRPS12) from Bos taurus (Bovine).